A 326-amino-acid chain; its full sequence is Membrane-associated kinase regulator 5 (326 aa).

Disordered regions lie at residues 188-239 (TKKQ…GMSP) and 267-326 (GSRE…KISD). Composition is skewed to low complexity over residues 190–202 (KQSS…PTSS) and 270–305 (ESSL…SSDS).

As to expression, expressed in roots.

The protein resides in the cell membrane. It localises to the cytoplasm. Its subcellular location is the cytosol. In terms of biological role, positive effector of CLE45 peptide signaling. Post-transcriptionally regulated amplifier of the CLE45 peptide signal that acts downstream of BAM3 in the regulation of the transition of root protophloem cells from proliferation to differentiation; thus preventing primary root elongation but stimulating lateral roots development. This Arabidopsis thaliana (Mouse-ear cress) protein is Membrane-associated kinase regulator 5.